Reading from the N-terminus, the 212-residue chain is Thymidylate kinase (212 aa).

Position 13–20 (13–20 (GLEGAGKS)) interacts with ATP.

This sequence belongs to the thymidylate kinase family.

It catalyses the reaction dTMP + ATP = dTDP + ADP. Functionally, phosphorylation of dTMP to form dTDP in both de novo and salvage pathways of dTTP synthesis. The protein is Thymidylate kinase of Legionella pneumophila (strain Corby).